The chain runs to 347 residues: Dual specificity mitogen-activated protein kinase kinase 3 (347 aa).

Methionine 1 carries the post-translational modification N-acetylmethionine. The segment covering 1–15 (MESPASSQPASMPQS) has biased composition (low complexity). A disordered region spans residues 1–46 (MESPASSQPASMPQSKGKSKRKKDLRISCMSKPPAPNPTPPRNLDS). A phosphoserine mark is found at serine 3 and serine 15. Positions 64 to 325 (LVTISELGRG…YLELMEHPFF (262 aa)) constitute a Protein kinase domain. Residues 70 to 78 (LGRGAYGVV) and lysine 93 each bind ATP. The active-site Proton acceptor is the aspartate 190. Residue serine 218 is modified to Phosphoserine. Threonine 222 carries the post-translational modification Phosphothreonine.

Belongs to the protein kinase superfamily. STE Ser/Thr protein kinase family. MAP kinase kinase subfamily. In terms of assembly, component of a signaling complex containing at least AKAP13, PKN1, MAPK14, ZAK and MAP2K3. Within this complex, AKAP13 interacts directly with PKN1, which in turn recruits MAPK14, MAP2K3 and ZAK. Binds to DYRK1B/MIRK and increases its kinase activity. Part of a complex with MAP3K3, RAC1 and CCM2. Interacts with ARRB1. As to quaternary structure, (Microbial infection) Interacts with Yersinia YopJ. In terms of processing, autophosphorylated. Phosphorylation on Ser-218 and Thr-222 by MAP kinase kinase kinases positively regulates the kinase activity. Phosphorylated by TAOK2. (Microbial infection) Yersinia YopJ may acetylate Ser/Thr residues, preventing phosphorylation and activation, thus blocking the MAPK signaling pathway. As to expression, abundant expression is seen in the skeletal muscle. It is also widely expressed in other tissues.

The catalysed reaction is L-seryl-[protein] + ATP = O-phospho-L-seryl-[protein] + ADP + H(+). It carries out the reaction L-threonyl-[protein] + ATP = O-phospho-L-threonyl-[protein] + ADP + H(+). It catalyses the reaction L-tyrosyl-[protein] + ATP = O-phospho-L-tyrosyl-[protein] + ADP + H(+). Activated by dual phosphorylation on Ser-218 and Thr-222. Dual specificity kinase. Is activated by cytokines and environmental stress in vivo. Catalyzes the concomitant phosphorylation of a threonine and a tyrosine residue in the MAP kinase p38. Part of a signaling cascade that begins with the activation of the adrenergic receptor ADRA1B and leads to the activation of MAPK14. In Homo sapiens (Human), this protein is Dual specificity mitogen-activated protein kinase kinase 3 (MAP2K3).